The chain runs to 395 residues: RNA pseudouridine synthase 7 (395 aa).

The interval 1–21 is disordered; that stretch reads MKRKQQEDDNDDGVEKAVSPV. One can recognise an S4 RNA-binding domain in the interval 74-136; that stretch reads KTIVDLFADE…HEPPVMIDDV (63 aa). Residue Asp187 is part of the active site. The span at 244–255 shows a compositional bias: polar residues; the sequence is EGRSTAEDANSS. The disordered stretch occupies residues 244–263; that stretch reads EGRSTAEDANSSGDDKKVKG.

The protein belongs to the pseudouridine synthase RluA family.

The catalysed reaction is a uridine in RNA = a pseudouridine in RNA. This is RNA pseudouridine synthase 7 from Arabidopsis thaliana (Mouse-ear cress).